The following is a 500-amino-acid chain: Phenylalanine--tRNA ligase alpha subunit (500 aa).

L-phenylalanine is bound by residues threonine 343, 382 to 384 (QVD), and phenylalanine 423. Residue glutamate 425 coordinates Mg(2+). Position 448 (phenylalanine 448) interacts with L-phenylalanine.

This sequence belongs to the class-II aminoacyl-tRNA synthetase family. Phe-tRNA synthetase alpha subunit type 2 subfamily. In terms of assembly, tetramer of two alpha and two beta subunits. Requires Mg(2+) as cofactor.

The protein resides in the cytoplasm. The catalysed reaction is tRNA(Phe) + L-phenylalanine + ATP = L-phenylalanyl-tRNA(Phe) + AMP + diphosphate + H(+). In Thermococcus onnurineus (strain NA1), this protein is Phenylalanine--tRNA ligase alpha subunit.